We begin with the raw amino-acid sequence, 421 residues long: Enolase (421 aa).

Gln-165 is a (2R)-2-phosphoglycerate binding site. Glu-207 acts as the Proton donor in catalysis. Residues Asp-244, Glu-285, and Asp-312 each contribute to the Mg(2+) site. Positions 337, 366, 367, and 388 each coordinate (2R)-2-phosphoglycerate. The active-site Proton acceptor is Lys-337.

The protein belongs to the enolase family. Mg(2+) serves as cofactor.

Its subcellular location is the cytoplasm. It is found in the secreted. It localises to the cell surface. It carries out the reaction (2R)-2-phosphoglycerate = phosphoenolpyruvate + H2O. It participates in carbohydrate degradation; glycolysis; pyruvate from D-glyceraldehyde 3-phosphate: step 4/5. Functionally, catalyzes the reversible conversion of 2-phosphoglycerate (2-PG) into phosphoenolpyruvate (PEP). It is essential for the degradation of carbohydrates via glycolysis. In Ehrlichia chaffeensis (strain ATCC CRL-10679 / Arkansas), this protein is Enolase.